Consider the following 773-residue polypeptide: Protein FAM149A (773 aa).

Low complexity-rich tracts occupy residues 18 to 37 (TSTA…AAAA) and 54 to 90 (LLRA…AAGA). Disordered regions lie at residues 18 to 155 (TSTA…RELG), 173 to 210 (DIGE…DSLP), 232 to 264 (FSSS…TERG), and 568 to 613 (TQNE…PWRL). The span at 174–186 (IGEEGASDGDSGD) shows a compositional bias: acidic residues. Positions 245–264 (TSWSGSATQSSTTGSSTERG) are enriched in low complexity.

It belongs to the FAM149 family.

The polypeptide is Protein FAM149A (FAM149A) (Homo sapiens (Human)).